A 694-amino-acid chain; its full sequence is Beta-mannosyltransferase 8 (694 aa).

Over 1–11 the chain is Cytoplasmic; sequence MKFPKLRKRTV. A helical transmembrane segment spans residues 12–29; sequence YWAVLTVFALFTIHFVFQ. Over 30-694 the chain is Extracellular; sequence YKEHNSHRVQ…YLYDHASVNS (665 aa). 2 N-linked (GlcNAc...) asparagine glycosylation sites follow: Asn-101 and Asn-542.

The protein belongs to the BMT family.

The protein localises to the membrane. Beta-mannosyltransferase involved in cell wall biosynthesis through beta-1,2-mannosylation of cell wall phosphopeptidomannan. Plays a role in the ability to produce hyphae in the presence of three bacterial species. The protein is Beta-mannosyltransferase 8 (BMT8) of Candida albicans (strain SC5314 / ATCC MYA-2876) (Yeast).